Here is a 709-residue protein sequence, read N- to C-terminus: Nucleobase-ascorbate transporter 12 (709 aa).

The segment at 1–145 (MSSSDPKPGP…GSGDPVRRPG (145 aa)) is disordered. Pro residues predominate over residues 7–19 (KPGPKPGPWPPTP). Ser-40 carries the post-translational modification Phosphoserine. The segment covering 41-53 (GETTATDSSSGQL) has biased composition (polar residues). 2 stretches are compositionally biased toward basic and acidic residues: residues 89 to 98 (ETDKDKKEKP) and 113 to 122 (QPVKRRRDSD). Transmembrane regions (helical) follow at residues 190-210 (YLSM…AMGG), 218-238 (VVST…SFGS), 240-260 (LPLI…IINS), 283-303 (IIIG…SLIL), 308-328 (PVVV…YGFP), 329-349 (LVGK…IFAL), 361-381 (IFLI…AFLL), 438-458 (WGVP…SVIA), 530-550 (GACV…LASI), 551-571 (PQVM…ALGL), 585-605 (IIIV…FQQY), and 639-659 (YVMN…AVIL).

It belongs to the nucleobase:cation symporter-2 (NCS2) (TC 2.A.40) family. Ubiquitous.

The protein resides in the cell membrane. This chain is Nucleobase-ascorbate transporter 12 (NAT12), found in Arabidopsis thaliana (Mouse-ear cress).